A 540-amino-acid chain; its full sequence is Chaperonin GroEL (540 aa).

ATP contacts are provided by residues 30–33 (TLGP), Lys-51, 87–91 (DGTTT), Gly-415, 479–481 (NAA), and Asp-495.

Belongs to the chaperonin (HSP60) family. Forms a cylinder of 14 subunits composed of two heptameric rings stacked back-to-back. Interacts with the co-chaperonin GroES.

The protein resides in the cytoplasm. It catalyses the reaction ATP + H2O + a folded polypeptide = ADP + phosphate + an unfolded polypeptide.. Its function is as follows. Together with its co-chaperonin GroES, plays an essential role in assisting protein folding. The GroEL-GroES system forms a nano-cage that allows encapsulation of the non-native substrate proteins and provides a physical environment optimized to promote and accelerate protein folding. The chain is Chaperonin GroEL from Raoultella planticola (Klebsiella planticola).